The primary structure comprises 242 residues: LexA repressor (242 aa).

A DNA-binding region (H-T-H motif) is located at residues 26-46; sequence FEEMKAALNLKSKSGIHRLIS. Active-site for autocatalytic cleavage activity residues include serine 163 and lysine 201.

Belongs to the peptidase S24 family. In terms of assembly, homodimer.

The enzyme catalyses Hydrolysis of Ala-|-Gly bond in repressor LexA.. Represses a number of genes involved in the response to DNA damage (SOS response), including recA and lexA. In the presence of single-stranded DNA, RecA interacts with LexA causing an autocatalytic cleavage which disrupts the DNA-binding part of LexA, leading to derepression of the SOS regulon and eventually DNA repair. This chain is LexA repressor, found in Granulibacter bethesdensis (strain ATCC BAA-1260 / CGDNIH1).